The primary structure comprises 107 residues: Anti-adapter protein IraM (107 aa).

It belongs to the IraM/RssC family.

It is found in the cytoplasm. Functionally, inhibits RpoS proteolysis by regulating RssB activity, thereby increasing the stability of the sigma stress factor RpoS during magnesium starvation. In Escherichia coli O7:K1 (strain IAI39 / ExPEC), this protein is Anti-adapter protein IraM.